Here is a 152-residue protein sequence, read N- to C-terminus: Ribonuclease H (152 aa).

An RNase H type-1 domain is found at 6–147 (KKNNVIAYTD…ADELANKAIA (142 aa)). The Mg(2+) site is built by aspartate 15, glutamate 53, aspartate 75, and aspartate 139.

Belongs to the RNase H family. As to quaternary structure, monomer. Mg(2+) is required as a cofactor.

It localises to the cytoplasm. It carries out the reaction Endonucleolytic cleavage to 5'-phosphomonoester.. In terms of biological role, endonuclease that specifically degrades the RNA of RNA-DNA hybrids. This chain is Ribonuclease H, found in Francisella philomiragia subsp. philomiragia (strain ATCC 25017 / CCUG 19701 / FSC 153 / O#319-036).